A 247-amino-acid chain; its full sequence is Ferredoxin:CoB-CoM heterodisulfide reductase subunit C (247 aa).

The 4Fe-4S ferredoxin-type domain occupies 32–62 (TPESLGLDRCIQCGACTASCPAARFTDYSPR). Residues Cys-41, Cys-44, Cys-47, Cys-51, Cys-84, Cys-87, Cys-90, and Cys-94 each contribute to the [4Fe-4S] cluster site. Residues 216–240 (RTGTSCTEKKKNSGDLGFESDREYT) are compositionally biased toward basic and acidic residues. Residues 216–247 (RTGTSCTEKKKNSGDLGFESDREYTGQEALTV) are disordered.

This sequence belongs to the HdrC family. As to quaternary structure, the ferredoxin:CoB-CoM heterodisulfide reductase is composed of three subunits; HdrA1, HdrB1 and HdrC1. [4Fe-4S] cluster is required as a cofactor.

It is found in the cytoplasm. The enzyme catalyses coenzyme B + coenzyme M + 2 oxidized [2Fe-2S]-[ferredoxin] = coenzyme M-coenzyme B heterodisulfide + 2 reduced [2Fe-2S]-[ferredoxin] + 2 H(+). The protein operates within cofactor metabolism; coenzyme M-coenzyme B heterodisulfide reduction; coenzyme B and coenzyme M from coenzyme M-coenzyme B heterodisulfide: step 1/1. Part of a complex that catalyzes the reversible reduction of CoM-S-S-CoB to the thiol-coenzymes H-S-CoM (coenzyme M) and H-S-CoB (coenzyme B). Probably involved in methylotrophic methanogenesis but not in aceticlastic methanogenesis. The chain is Ferredoxin:CoB-CoM heterodisulfide reductase subunit C from Methanosarcina acetivorans (strain ATCC 35395 / DSM 2834 / JCM 12185 / C2A).